A 454-amino-acid polypeptide reads, in one-letter code: tRNA modification GTPase MnmE (454 aa).

(6S)-5-formyl-5,6,7,8-tetrahydrofolate-binding residues include arginine 23, glutamate 80, and lysine 120. The region spanning 216-377 (GMKVVIAGRP…LRDHLKQSMG (162 aa)) is the TrmE-type G domain. Asparagine 226 contacts K(+). Residues 226–231 (NAGKSS), 245–251 (TAIAGTT), 270–273 (DTAG), 335–338 (NKAD), and 358–360 (SAR) each bind GTP. Serine 230 contributes to the Mg(2+) binding site. K(+) contacts are provided by threonine 245, isoleucine 247, and threonine 250. Mg(2+) is bound at residue threonine 251. Lysine 454 contacts (6S)-5-formyl-5,6,7,8-tetrahydrofolate.

This sequence belongs to the TRAFAC class TrmE-Era-EngA-EngB-Septin-like GTPase superfamily. TrmE GTPase family. As to quaternary structure, homodimer. Heterotetramer of two MnmE and two MnmG subunits. K(+) is required as a cofactor.

It localises to the cytoplasm. Exhibits a very high intrinsic GTPase hydrolysis rate. Involved in the addition of a carboxymethylaminomethyl (cmnm) group at the wobble position (U34) of certain tRNAs, forming tRNA-cmnm(5)s(2)U34. The chain is tRNA modification GTPase MnmE from Pectobacterium atrosepticum (strain SCRI 1043 / ATCC BAA-672) (Erwinia carotovora subsp. atroseptica).